The sequence spans 610 residues: Calmegin (610 aa).

The first 19 residues, 1–19, serve as a signal peptide directing secretion; the sequence is MHFQAFWLCLGLLFISINA. Over 20 to 471 the chain is Lumenal; sequence EFMDDDVETE…LMAAAEGHPW (452 aa). Lys-128 is subject to N6-acetyllysine. A disulfide bridge connects residues Cys-151 and Cys-185. The interval 258–338 is disordered; that stretch reads VPPIKPPKEI…KPDDWNEDTD (81 aa). Residues 263 to 284 show a composition bias toward basic and acidic residues; that stretch reads PPKEIEDPNDKKPEEWDERAKI. A run of 8 repeats spans residues 267–280, 284–297, 303–316, 322–335, 339–352, 356–369, 370–383, and 384–397. A compositionally biased stretch (basic and acidic residues) spans 317–332; that stretch reads DEPKFIPDPNAEKPDD. The segment at 317 to 350 is interaction with PPIB; sequence DEPKFIPDPNAEKPDDWNEDTDGEWEAPQILNPA. The cysteines at positions 351 and 355 are disulfide-linked. A helical membrane pass occupies residues 472–492; the sequence is LWLIYLVTAGVPIALITSFCW. Over 493-610 the chain is Cytoplasmic; it reads PRKVKKKHKD…SVRKRRVRKD (118 aa). The segment covering 521–548 has biased composition (basic and acidic residues); it reads QEEKEEKAALEKPMDLEEEKKQNDGEML. The interval 521-610 is disordered; the sequence is QEEKEEKAAL…SVRKRRVRKD (90 aa). Residues 549–571 are compositionally biased toward acidic residues; sequence EKEEESEPEEKSEEEIEIIEGQE. Residues Ser-560, Ser-576, Ser-579, Ser-581, Ser-591, Ser-594, and Ser-601 each carry the phosphoserine modification. Residues 601-610 are compositionally biased toward basic residues; it reads SVRKRRVRKD.

Belongs to the calreticulin family. In terms of assembly, interacts with PPIB. Interacts with ADAM2. Interacts with PDILT. Detected in testis (at protein level). Detected in testis.

It is found in the endoplasmic reticulum membrane. In terms of biological role, functions during spermatogenesis as a chaperone for a range of client proteins that are important for sperm adhesion onto the egg zona pellucida and for subsequent penetration of the zona pellucida. Required for normal sperm migration from the uterus into the oviduct. Required for normal male fertility. Binds calcium ions. The protein is Calmegin (CLGN) of Homo sapiens (Human).